Here is a 232-residue protein sequence, read N- to C-terminus: Orotate phosphoribosyltransferase (232 aa).

Residues R107, K108, K111, H113, and 133-141 contribute to the 5-phospho-alpha-D-ribose 1-diphosphate site; that span reads EDLTTAGGS. T137 is an orotate binding site.

Belongs to the purine/pyrimidine phosphoribosyltransferase family. PyrE subfamily. In terms of assembly, homodimer. Requires Mg(2+) as cofactor.

The enzyme catalyses orotidine 5'-phosphate + diphosphate = orotate + 5-phospho-alpha-D-ribose 1-diphosphate. The protein operates within pyrimidine metabolism; UMP biosynthesis via de novo pathway; UMP from orotate: step 1/2. Its function is as follows. Catalyzes the transfer of a ribosyl phosphate group from 5-phosphoribose 1-diphosphate to orotate, leading to the formation of orotidine monophosphate (OMP). The chain is Orotate phosphoribosyltransferase from Rhizobium meliloti (strain 1021) (Ensifer meliloti).